The sequence spans 145 residues: Cytochrome c2 (145 aa).

The signal sequence occupies residues 1–21; that stretch reads MKFQVKALAAIAAFAALPALA. Gln-22 is subject to Pyrrolidone carboxylic acid. Cys-36, Cys-39, His-40, and Met-121 together coordinate heme c.

It belongs to the cytochrome c family. Binds 1 heme c group covalently per subunit.

It localises to the periplasm. Functionally, cytochrome c2 is found mainly in purple, non-sulfur, photosynthetic bacteria where it functions as the electron donor to the oxidized bacteriochlorophyll in the photophosphorylation pathway. However, it may also have a role in the respiratory chain and is found in some non-photosynthetic bacteria. The polypeptide is Cytochrome c2 (cycA) (Cereibacter sphaeroides (strain ATCC 17023 / DSM 158 / JCM 6121 / CCUG 31486 / LMG 2827 / NBRC 12203 / NCIMB 8253 / ATH 2.4.1.) (Rhodobacter sphaeroides)).